Reading from the N-terminus, the 63-residue chain is uncharacterized protein (63 aa).

Residues I38–F58 form a helical membrane-spanning segment.

It is found in the membrane. This is an uncharacterized protein from Saccharomyces cerevisiae (strain ATCC 204508 / S288c) (Baker's yeast).